The primary structure comprises 357 residues: Serine proteinase inhibitor 1 (357 aa).

It belongs to the serpin family. Poxviruses subfamily.

It localises to the host cytoplasm. In terms of biological role, this viral protein may be involved in the regulation of the complement cascade. Involved in red pock formation. The sequence is that of Serine proteinase inhibitor 1 (SPI-1) from Oryctolagus cuniculus (Rabbit).